The sequence spans 135 residues: Ribosome-binding factor A (135 aa).

This sequence belongs to the RbfA family. Monomer. Binds 30S ribosomal subunits, but not 50S ribosomal subunits or 70S ribosomes.

It is found in the cytoplasm. One of several proteins that assist in the late maturation steps of the functional core of the 30S ribosomal subunit. Associates with free 30S ribosomal subunits (but not with 30S subunits that are part of 70S ribosomes or polysomes). Required for efficient processing of 16S rRNA. May interact with the 5'-terminal helix region of 16S rRNA. The polypeptide is Ribosome-binding factor A (Hahella chejuensis (strain KCTC 2396)).